Here is a 233-residue protein sequence, read N- to C-terminus: MRFCLLVAFILPGLFLVHAAPTSSTELPEASGEAPETSPLVQNDEQPHQRLTFYNWDYKDLGTTAFEDISFPARQPPAFVNQTEKCPDGWLRFADSCYWIEKELLGFAKAERNCFEKQSTLFVANSIEEWDAIRVQAKEAFFSWIGLVRFTHYEKLEQLPRWQTEGALNPTKINWLIKPYKPLFNGWSSLANCAASYKSPSSLESASYTYFYPCTYMLYSICERNSTIVNALQ.

A signal peptide spans 1–19 (MRFCLLVAFILPGLFLVHA). Ser-31 carries O-linked (Xyl...) (chondroitin sulfate) serine glycosylation. N-linked (GlcNAc...) asparagine glycosylation is present at Asn-81. The C-type lectin domain maps to 93–223 (FADSCYWIEK…CTYMLYSICE (131 aa)). Disulfide bonds link Cys-114–Cys-222 and Cys-193–Cys-214. N-linked (GlcNAc...) asparagine glycosylation occurs at Asn-225.

This is C-type lectin domain-containing protein 87 from Caenorhabditis elegans.